Consider the following 403-residue polypeptide: S-adenosylmethionine synthase (403 aa).

Residue 140 to 145 (GKGSTD) participates in ATP binding.

The protein belongs to the AdoMet synthase 2 family. It depends on Mg(2+) as a cofactor.

It carries out the reaction L-methionine + ATP + H2O = S-adenosyl-L-methionine + phosphate + diphosphate. The protein operates within amino-acid biosynthesis; S-adenosyl-L-methionine biosynthesis; S-adenosyl-L-methionine from L-methionine: step 1/1. Functionally, catalyzes the formation of S-adenosylmethionine from methionine and ATP. The chain is S-adenosylmethionine synthase from Sulfolobus acidocaldarius (strain ATCC 33909 / DSM 639 / JCM 8929 / NBRC 15157 / NCIMB 11770).